The following is a 338-amino-acid chain: Envelope glycoprotein K (338 aa).

The first 30 residues, 1-30 (MLAVRSLQHLSTVVLITAYGLVLVWYTVFG), serve as a signal peptide directing secretion. The Extracellular portion of the chain corresponds to 31-121 (ASPLHRCIYA…VNCLETLWYT (91 aa)). An involved in fusion region spans residues 31-121 (ASPLHRCIYA…VNCLETLWYT (91 aa)). Residues Asn48 and Asn58 are each glycosylated (N-linked (GlcNAc...) asparagine; by host). The chain crosses the membrane as a helical span at residues 122-140 (RVRLVVVGWFLYLAFVALH). The Cytoplasmic segment spans residues 141–212 (QRRCMFGVVS…DPVTFLYHRP (72 aa)). The chain crosses the membrane as a helical span at residues 213–233 (AIGVIVGCELIVRFVAVGLIV). The Extracellular portion of the chain corresponds to 234–243 (GTAFISRGAC). The helical transmembrane segment at 244-264 (AITYPLFLTITTWCFVSTIGL) threads the bilayer. The Cytoplasmic portion of the chain corresponds to 265-301 (TELYCILRRGPAPKNADKAAAPGRSKGLSGVCGRCCS). An interaction with UL20 region spans residues 265–301 (TELYCILRRGPAPKNADKAAAPGRSKGLSGVCGRCCS). Residues 302 to 322 (IILSGIAMRLCYIAVVAGVVL) form a helical membrane-spanning segment. The Extracellular portion of the chain corresponds to 323–338 (VALHYEQEIQRRLFDV).

Belongs to the alphaherpesvirinae glycoprotein K family. In terms of assembly, interacts (via UL20 interaction region) with protein UL20 (via N-terminus); this interaction probably plays a role in the coordinate transport of protein UL20 and gK to the trans-Golgi network (TGN), and is required for the cell surface expression of gK. In terms of processing, N-glycosylated.

It localises to the host cell membrane. Its subcellular location is the host endosome membrane. The protein resides in the host Golgi apparatus membrane. Functionally, glycoprotein that probably modulates membrane fusion events during secondary envelopment of cytoplasmic capsids that bud into specific trans-Golgi network (TGN)-derived membranes. Also plays a role, together with gB, in virus-induced cell-to-cell fusion (syncytia formation). Seems to block fusion of virions with infected-cell membranes. The chain is Envelope glycoprotein K (gK) from Homo sapiens (Human).